Reading from the N-terminus, the 336-residue chain is MPKTETYPRLLADIGGTNARFGLEVAPRQIECVEVLRCEDFESLSDAVRFYLSKCKESLKLHPIYGSFAVATPIMGDFVQMTNNHWTFSIETTRQCLNLKKLLVINDFVAQAYAISAMQENDLAQIGGIKCEINAPKAILGPGTGLGVSTLIQNSDGSLKVLPGEGGHVSFAPFDDLEILVWQYARSKFNHVSAERFLSGSGLVLIYEALSKRKGLEKVAKLSKAELTPQIISERALNGDYPICRLTLDTFCSMLGTLAADVALTLGARGGVYLCGGIIPRFIDYFKTSPFRARFETKGRMGAFLASIPVHVVMKKTPGLDGAGIALENYLLHDRI.

Residue 12 to 17 coordinates ATP; it reads ADIGGT.

It belongs to the bacterial glucokinase family.

The protein localises to the cytoplasm. It carries out the reaction D-glucose + ATP = D-glucose 6-phosphate + ADP + H(+). The protein is Glucokinase of Helicobacter pylori (strain J99 / ATCC 700824) (Campylobacter pylori J99).